A 220-amino-acid chain; its full sequence is Glutathione peroxidase (220 aa).

Sec64 is a catalytic residue. A non-standard amino acid (selenocysteine) is located at residue Sec64.

It belongs to the glutathione peroxidase family. In terms of processing, during periods of oxidative stress, Sec-64 may react with a superoxide radical, irreversibly lose hydroselenide and be converted to dehydroalanine.

The catalysed reaction is 2 glutathione + H2O2 = glutathione disulfide + 2 H2O. Its function is as follows. May protect the virus and component of infected cells from oxidative damage by peroxides whose formation may be stimulated by infection. In Homo sapiens (Human), this protein is Glutathione peroxidase (GPX1).